The following is a 163-amino-acid chain: Nucleotide-binding protein RBAM_011030 (163 aa).

This sequence belongs to the YajQ family.

In terms of biological role, nucleotide-binding protein. The protein is Nucleotide-binding protein RBAM_011030 of Bacillus velezensis (strain DSM 23117 / BGSC 10A6 / LMG 26770 / FZB42) (Bacillus amyloliquefaciens subsp. plantarum).